The primary structure comprises 83 residues: UPF0457 protein YnzG (83 aa).

This sequence belongs to the UPF0457 family.

In Bacillus subtilis (strain 168), this protein is UPF0457 protein YnzG (ynzG).